Here is a 193-residue protein sequence, read N- to C-terminus: Probable gluconokinase (193 aa).

ATP is bound at residue 18 to 25 (GTAGTGKS).

It belongs to the gluconokinase GntK/GntV family.

It localises to the cytoplasm. The enzyme catalyses D-gluconate + ATP = 6-phospho-D-gluconate + ADP + H(+). Its pathway is carbohydrate acid metabolism; D-gluconate degradation. This chain is Probable gluconokinase, found in Saccharomyces cerevisiae (strain ATCC 204508 / S288c) (Baker's yeast).